Here is a 640-residue protein sequence, read N- to C-terminus: Threonine--tRNA ligase (640 aa).

The 61-residue stretch at 1-61 (MPIITLPNGD…TEDSTLQIIT (61 aa)) folds into the TGS domain. Positions 242 to 533 (DHRKIGKALD…LIEHYAGFMP (292 aa)) are catalytic. The Zn(2+) site is built by cysteine 333, histidine 384, and histidine 510.

This sequence belongs to the class-II aminoacyl-tRNA synthetase family. In terms of assembly, homodimer. Requires Zn(2+) as cofactor.

The protein localises to the cytoplasm. The catalysed reaction is tRNA(Thr) + L-threonine + ATP = L-threonyl-tRNA(Thr) + AMP + diphosphate + H(+). Functionally, catalyzes the attachment of threonine to tRNA(Thr) in a two-step reaction: L-threonine is first activated by ATP to form Thr-AMP and then transferred to the acceptor end of tRNA(Thr). Also edits incorrectly charged L-seryl-tRNA(Thr). The polypeptide is Threonine--tRNA ligase (Acinetobacter baumannii (strain SDF)).